The following is a 699-amino-acid chain: Fervidolysin (699 aa).

The signal sequence occupies residues 1-21 (MRKVLLIASIVALILALFSCA). Positions 22–149 (NPSFEPRSKA…MYKIRKPGLN (128 aa)) are excised as a propeptide. A Ca(2+)-binding site is contributed by E157. One can recognise a Peptidase S8 domain in the interval 163–465 (LWGLEAIGVT…YGLVKLDAAL (303 aa)). The active-site Charge relay system is D190. D199 lines the Ca(2+) pocket. H228 acts as the Charge relay system in catalysis. Residues K239, D241, K243, and I245 each contribute to the Ca(2+) site. S409 acts as the Charge relay system in catalysis.

Belongs to the peptidase S8 family. Post-translationally, undergoes auto-proteolytic processing. Once cleaved, the propeptide can remain associated with the protease and blocks its activity. The physiological activation of fervidolysin is proposed to be achieved through the stepwise removal of the propeptide accomplished by several proteolytic cleavages that may not be autolytic.

It is found in the cell surface. Is inhibited by phenylmethylsulfonyl fluoride and 3,4-dichloroisocoumarin. EDTA and iodoacetate (1 to 5 mM) have only little effect on the enzyme activity. In terms of biological role, protease able to degrade keratin into peptides. Is responsible for keratinolysis by F.pennivorans, which allows this bacterium to grow on native feathers. The protein is Fervidolysin of Fervidobacterium pennivorans.